A 384-amino-acid chain; its full sequence is Multidrug/solvent efflux pump periplasmic linker protein MepA (384 aa).

A signal peptide spans 1–22 (MQFKPAVTALVSAVALATLLSG). Cys-23 is lipidated: N-palmitoyl cysteine. Cys-23 carries S-diacylglycerol cysteine lipidation. The stretch at 115-155 (LAERYKQLIDEQAVSKQEYDDANAKRLQAEASLKSAQIDLR) forms a coiled coil. The disordered stretch occupies residues 362-384 (ATNVKKPAGPDQANAAKADAKAE). Low complexity predominate over residues 368–378 (PAGPDQANAAK).

It belongs to the membrane fusion protein (MFP) (TC 8.A.1) family.

Its subcellular location is the cell inner membrane. Functionally, the periplasmic linker protein component of an organic solvent and antibiotic efflux pump; confers resistance to toluene, hexane, p-xylene, ampicillin, penicillin G, erythromycin, novobiocin and tetracycline. This is Multidrug/solvent efflux pump periplasmic linker protein MepA (mepA) from Pseudomonas putida (Arthrobacter siderocapsulatus).